The primary structure comprises 371 residues: Alanine racemase (371 aa).

Lys-40 (proton acceptor; specific for D-alanine) is an active-site residue. Lys-40 bears the N6-(pyridoxal phosphate)lysine mark. Arg-136 serves as a coordination point for substrate. Tyr-263 serves as the catalytic Proton acceptor; specific for L-alanine. Residue Met-310 coordinates substrate.

The protein belongs to the alanine racemase family. The cofactor is pyridoxal 5'-phosphate.

The catalysed reaction is L-alanine = D-alanine. It functions in the pathway amino-acid biosynthesis; D-alanine biosynthesis; D-alanine from L-alanine: step 1/1. Its function is as follows. Catalyzes the interconversion of L-alanine and D-alanine. May also act on other amino acids. This chain is Alanine racemase (alr), found in Streptococcus mutans serotype c (strain ATCC 700610 / UA159).